The primary structure comprises 375 residues: Acyl-coenzyme A diphosphatase NUDT19 (375 aa).

Residues 15 to 263 (AASIVLAAGW…IWLPPPQFYE (249 aa)) enclose the Nudix hydrolase domain. The disordered stretch occupies residues 91–116 (LGPAPFSRTAFPSLPDTDDHKTDNTG). The Nudix box signature appears at 116–137 (GTLPEDVAFRICAVREAFEEAG). The Mg(2+) site is built by Glu131 and Glu135. The Microbody targeting signal motif lies at 373 to 375 (SHL).

Belongs to the Nudix hydrolase family. Monomer. Mg(2+) is required as a cofactor. Mn(2+) serves as cofactor.

Its subcellular location is the peroxisome. It catalyses the reaction an acyl-CoA + H2O = an acyl-4'-phosphopantetheine + adenosine 3',5'-bisphosphate + 2 H(+). It carries out the reaction CoA + H2O = (R)-4'-phosphopantetheine + adenosine 3',5'-bisphosphate + 2 H(+). The enzyme catalyses hexanoyl-CoA + H2O = hexanoyl-4'-phosphopantetheine + adenosine 3',5'-bisphosphate + 2 H(+). The catalysed reaction is octanoyl-CoA + H2O = S-octanoyl-4'-phosphopantetheine + adenosine 3',5'-bisphosphate + 2 H(+). It catalyses the reaction butanoyl-CoA + H2O = S-butanoyl-4'-phosphopantetheine + adenosine 3',5'-bisphosphate + 2 H(+). It carries out the reaction propanoyl-CoA + H2O = propanoyl-4'-phosphopantetheine + adenosine 3',5'-bisphosphate + 2 H(+). The enzyme catalyses malonyl-CoA + H2O = malonyl-4'-phosphopantetheine + adenosine 3',5'-bisphosphate + 2 H(+). The catalysed reaction is succinyl-CoA + H2O = succinyl-4'-phosphopantetheine + adenosine 3',5'-bisphosphate + 2 H(+). It catalyses the reaction choloyl-CoA + H2O = S-choloyl-4'-phosphopantetheine + adenosine 3',5'-bisphosphate + 2 H(+). It carries out the reaction 4,8-dimethylnonanoyl-CoA + H2O = S-(4,8-dimethylnonanoyl)-4'-phosphopantetheine + adenosine 3',5'-bisphosphate + 2 H(+). The enzyme catalyses (9Z,12Z,15Z)-octadecatrienoyl-CoA + H2O = S-(9Z,12Z,15Z-octadecatrienoyl)-4'-phosphopantetheine + adenosine 3',5'-bisphosphate + 2 H(+). The catalysed reaction is (9Z,12Z)-octadecadienoyl-CoA + H2O = S-(9Z,12Z-octadecadienoyl)-4'-phosphopantetheine + adenosine 3',5'-bisphosphate + 2 H(+). It catalyses the reaction (9Z)-hexadecenoyl-CoA + H2O = S-(9Z-hexadecenoyl)-4'-phosphopantetheine + adenosine 3',5'-bisphosphate + 2 H(+). It carries out the reaction (9Z)-tetradecenoyl-CoA + H2O = S-(9Z-tetradecenoyl)-4'-phosphopantetheine + adenosine 3',5'-bisphosphate + 2 H(+). The enzyme catalyses (6Z)-octenoyl-CoA + H2O = S-(6Z-octenoyl)-4'-phosphopantetheine + adenosine 3',5'-bisphosphate + 2 H(+). The catalysed reaction is hexadecanoyl-CoA + H2O = S-hexadecanoyl-4'-phosphopantetheine + adenosine 3',5'-bisphosphate + 2 H(+). It catalyses the reaction tetradecanoyl-CoA + H2O = tetradecanoyl-4'-phosphopantetheine + adenosine 3',5'-bisphosphate + 2 H(+). It carries out the reaction dodecanoyl-CoA + H2O = S-dodecanoyl-4'-phosphopantetheine + adenosine 3',5'-bisphosphate + 2 H(+). The enzyme catalyses a 5'-end CoA-ribonucleoside in mRNA + H2O = a 5'-end phospho-adenosine-phospho-ribonucleoside in mRNA + (R)-4'-phosphopantetheine + 2 H(+). Its function is as follows. Fatty acyl-coenzyme A (CoA) diphosphatase that hydrolyzes fatty acyl-CoA to yield acyl-4'-phosphopantetheine and adenosine 3',5'-bisphosphate. Mediates the hydrolysis of a wide range of CoA esters, including choloyl-CoA and branched-chain fatty-acyl-CoA esters and at low substrate concentrations medium and long-chain fatty-acyl-CoA esters are the primary substrates. Highest activity seen with medium-chain acyl-CoA esters and higher rates of activity seen with the unsaturated acyl-CoA esters compared with the saturated esters. Exhibits decapping activity towards dpCoA-capped RNAs in vitro. This chain is Acyl-coenzyme A diphosphatase NUDT19 (NUDT19), found in Homo sapiens (Human).